The primary structure comprises 293 residues: Formamidopyrimidine-DNA glycosylase (293 aa).

Proline 2 acts as the Schiff-base intermediate with DNA in catalysis. Glutamate 3 (proton donor) is an active-site residue. Lysine 58 serves as the catalytic Proton donor; for beta-elimination activity. Residues histidine 104, arginine 127, and arginine 170 each coordinate DNA. Residues serine 257–threonine 293 form an FPG-type zinc finger. The active-site Proton donor; for delta-elimination activity is arginine 283.

This sequence belongs to the FPG family. As to quaternary structure, monomer. Requires Zn(2+) as cofactor.

The catalysed reaction is Hydrolysis of DNA containing ring-opened 7-methylguanine residues, releasing 2,6-diamino-4-hydroxy-5-(N-methyl)formamidopyrimidine.. It catalyses the reaction 2'-deoxyribonucleotide-(2'-deoxyribose 5'-phosphate)-2'-deoxyribonucleotide-DNA = a 3'-end 2'-deoxyribonucleotide-(2,3-dehydro-2,3-deoxyribose 5'-phosphate)-DNA + a 5'-end 5'-phospho-2'-deoxyribonucleoside-DNA + H(+). In terms of biological role, involved in base excision repair of DNA damaged by oxidation or by mutagenic agents. Acts as a DNA glycosylase that recognizes and removes damaged bases. Has a preference for oxidized purines, such as 7,8-dihydro-8-oxoguanine (8-oxoG). Has AP (apurinic/apyrimidinic) lyase activity and introduces nicks in the DNA strand. Cleaves the DNA backbone by beta-delta elimination to generate a single-strand break at the site of the removed base with both 3'- and 5'-phosphates. The protein is Formamidopyrimidine-DNA glycosylase of Brucella canis (strain ATCC 23365 / NCTC 10854 / RM-666).